Reading from the N-terminus, the 78-residue chain is UPF0270 protein ECA4061 (78 aa).

The protein belongs to the UPF0270 family.

The chain is UPF0270 protein ECA4061 from Pectobacterium atrosepticum (strain SCRI 1043 / ATCC BAA-672) (Erwinia carotovora subsp. atroseptica).